Reading from the N-terminus, the 116-residue chain is Movement protein TGB2 (116 aa).

At 1 to 11 (MPLTPPPNPQK) the chain is on the cytoplasmic side. A helical transmembrane segment spans residues 12–32 (TYQIAILALGLVLLAFVLISD). The Lumenal segment spans residues 33–77 (HSPKVGDHLHNLPFGGEYKDGTKSIKYFQRPNQHSLSKTLAKSHN). The helical transmembrane segment at 78–98 (TTIFLLILGLIVTLHGLHYFN) threads the bilayer. The Cytoplasmic segment spans residues 99 to 116 (NNRRVSSSLHCVLCQNKH).

The protein belongs to the Tymovirales TGBp2 protein family.

Its subcellular location is the host endoplasmic reticulum membrane. Its function is as follows. Plays a role in viral cell-to-cell propagation, by facilitating genome transport to neighboring plant cells through plasmosdesmata,. The sequence is that of Movement protein TGB2 from White clover mosaic virus (strain M) (WCMV).